The following is a 323-amino-acid chain: Homoserine kinase (323 aa).

An ATP-binding site is contributed by 97 to 107; the sequence is PHGRGMGSSGA.

Belongs to the GHMP kinase family. Homoserine kinase subfamily.

The protein localises to the cytoplasm. The enzyme catalyses L-homoserine + ATP = O-phospho-L-homoserine + ADP + H(+). It functions in the pathway amino-acid biosynthesis; L-threonine biosynthesis; L-threonine from L-aspartate: step 4/5. In terms of biological role, catalyzes the ATP-dependent phosphorylation of L-homoserine to L-homoserine phosphate. This is Homoserine kinase from Leifsonia xyli subsp. xyli (strain CTCB07).